The primary structure comprises 541 residues: Transcription termination factor MTERF4, chloroplastic (541 aa).

A chloroplast-targeting transit peptide spans Met-1–Lys-45. Disordered regions lie at residues Ser-66–Ser-103 and Glu-503–Ala-541. A compositionally biased stretch (basic and acidic residues) spans Gly-85–Lys-99. Polar residues predominate over residues Asp-507–Met-517. Positions Arg-521 to Ala-541 are enriched in acidic residues.

This sequence belongs to the mTERF family.

It is found in the plastid. Its subcellular location is the chloroplast. The protein resides in the mitochondrion. Its function is as follows. Transcription termination factor required for processing and steady-state levels of plastid transcripts. Required for splicing of the chloroplastic Clp protease (ClpP) group IIa intron. Required for maturation of 16S rRNA and 23S rRNA in the chloroplast. Essential for embryogenesis. Required for the maintenance of the correct levels of transcripts in the mitochondria and chloroplasts. The polypeptide is Transcription termination factor MTERF4, chloroplastic (Arabidopsis thaliana (Mouse-ear cress)).